Reading from the N-terminus, the 271-residue chain is Putative phosphoenolpyruvate synthase regulatory protein (271 aa).

152–159 contacts ADP; sequence GASRSGKT.

It belongs to the pyruvate, phosphate/water dikinase regulatory protein family. PSRP subfamily.

It carries out the reaction [pyruvate, water dikinase] + ADP = [pyruvate, water dikinase]-phosphate + AMP + H(+). The enzyme catalyses [pyruvate, water dikinase]-phosphate + phosphate + H(+) = [pyruvate, water dikinase] + diphosphate. In terms of biological role, bifunctional serine/threonine kinase and phosphorylase involved in the regulation of the phosphoenolpyruvate synthase (PEPS) by catalyzing its phosphorylation/dephosphorylation. The polypeptide is Putative phosphoenolpyruvate synthase regulatory protein (Marinobacter nauticus (strain ATCC 700491 / DSM 11845 / VT8) (Marinobacter aquaeolei)).